The sequence spans 124 residues: Fluoride-specific ion channel FluC (124 aa).

Transmembrane regions (helical) follow at residues 1 to 21, 38 to 58, 69 to 89, and 97 to 117; these read MIPL…LRFA, TLAV…LFLV, GLIV…LDTV, and VALA…ATWA. The Na(+) site is built by G76 and T79.

Belongs to the fluoride channel Fluc/FEX (TC 1.A.43) family.

Its subcellular location is the cell inner membrane. It catalyses the reaction fluoride(in) = fluoride(out). Na(+) is not transported, but it plays an essential structural role and its presence is essential for fluoride channel function. Functionally, fluoride-specific ion channel. Important for reducing fluoride concentration in the cell, thus reducing its toxicity. This Pseudomonas fluorescens (strain ATCC BAA-477 / NRRL B-23932 / Pf-5) protein is Fluoride-specific ion channel FluC.